A 148-amino-acid polypeptide reads, in one-letter code: Large ribosomal subunit protein bL9 (148 aa).

This sequence belongs to the bacterial ribosomal protein bL9 family.

Its function is as follows. Binds to the 23S rRNA. The polypeptide is Large ribosomal subunit protein bL9 (Bacillus cereus (strain G9842)).